We begin with the raw amino-acid sequence, 513 residues long: Light-independent protochlorophyllide reductase subunit B (513 aa).

Residue Asp36 coordinates [4Fe-4S] cluster. Asp299 functions as the Proton donor in the catalytic mechanism. Substrate is bound at residue 434 to 435; it reads GM.

This sequence belongs to the ChlB/BchB/BchZ family. Protochlorophyllide reductase is composed of three subunits; ChlL, ChlN and ChlB. Forms a heterotetramer of two ChlB and two ChlN subunits. [4Fe-4S] cluster is required as a cofactor.

The protein resides in the plastid. Its subcellular location is the chloroplast. The enzyme catalyses chlorophyllide a + oxidized 2[4Fe-4S]-[ferredoxin] + 2 ADP + 2 phosphate = protochlorophyllide a + reduced 2[4Fe-4S]-[ferredoxin] + 2 ATP + 2 H2O. The protein operates within porphyrin-containing compound metabolism; chlorophyll biosynthesis (light-independent). Functionally, component of the dark-operative protochlorophyllide reductase (DPOR) that uses Mg-ATP and reduced ferredoxin to reduce ring D of protochlorophyllide (Pchlide) to form chlorophyllide a (Chlide). This reaction is light-independent. The NB-protein (ChlN-ChlB) is the catalytic component of the complex. The sequence is that of Light-independent protochlorophyllide reductase subunit B from Marchantia polymorpha (Common liverwort).